The following is a 550-amino-acid chain: Flagellin (550 aa).

The protein belongs to the bacterial flagellin family.

The protein resides in the secreted. The protein localises to the bacterial flagellum. In terms of biological role, flagellin is the subunit protein which polymerizes to form the filaments of bacterial flagella. In Shigella flexneri, this protein is Flagellin (fliC).